The chain runs to 158 residues: Cyclic pyranopterin monophosphate synthase (158 aa).

Substrate is bound by residues 75 to 77 (LCH) and 113 to 114 (ME). D128 is a catalytic residue.

The protein belongs to the MoaC family. In terms of assembly, homohexamer; trimer of dimers.

The catalysed reaction is (8S)-3',8-cyclo-7,8-dihydroguanosine 5'-triphosphate = cyclic pyranopterin phosphate + diphosphate. Its pathway is cofactor biosynthesis; molybdopterin biosynthesis. Functionally, catalyzes the conversion of (8S)-3',8-cyclo-7,8-dihydroguanosine 5'-triphosphate to cyclic pyranopterin monophosphate (cPMP). This chain is Cyclic pyranopterin monophosphate synthase, found in Roseiflexus sp. (strain RS-1).